A 526-amino-acid polypeptide reads, in one-letter code: GMP synthase [glutamine-hydrolyzing] (526 aa).

The region spanning 3–199 (RVAIIDFGSQ…FVRIAGCDNN (197 aa)) is the Glutamine amidotransferase type-1 domain. Cys-83 acts as the Nucleophile in catalysis. Active-site residues include His-174 and Glu-176. The 193-residue stretch at 200 to 392 (WTVESFLDEQ…LGISDEILMR (193 aa)) folds into the GMPS ATP-PPase domain. 227-233 (SGGVDSS) contacts ATP.

In terms of assembly, homodimer.

It catalyses the reaction XMP + L-glutamine + ATP + H2O = GMP + L-glutamate + AMP + diphosphate + 2 H(+). The protein operates within purine metabolism; GMP biosynthesis; GMP from XMP (L-Gln route): step 1/1. Functionally, catalyzes the synthesis of GMP from XMP. In Ehrlichia chaffeensis (strain ATCC CRL-10679 / Arkansas), this protein is GMP synthase [glutamine-hydrolyzing].